Here is a 181-residue protein sequence, read N- to C-terminus: Adenine phosphoribosyltransferase (181 aa).

The protein belongs to the purine/pyrimidine phosphoribosyltransferase family. As to quaternary structure, homodimer.

The protein localises to the cytoplasm. It carries out the reaction AMP + diphosphate = 5-phospho-alpha-D-ribose 1-diphosphate + adenine. The protein operates within purine metabolism; AMP biosynthesis via salvage pathway; AMP from adenine: step 1/1. In terms of biological role, catalyzes a salvage reaction resulting in the formation of AMP, that is energically less costly than de novo synthesis. This chain is Adenine phosphoribosyltransferase, found in Aliivibrio fischeri (strain ATCC 700601 / ES114) (Vibrio fischeri).